The following is a 480-amino-acid chain: UDP-glucose 6-dehydrogenase 2 (480 aa).

Residues 8 to 13 (GAGYVG), aspartate 33, arginine 38, 86 to 90 (VNTPT), 127 to 128 (ST), and glutamate 161 each bind NAD(+). Residues 157-161 (EFLAE), 216-223 (KLAANAFL), and 256-269 (RIGP…VGFG) each bind substrate. Cysteine 272 acts as the Nucleophile in catalysis. 272-275 (CFQK) lines the NAD(+) pocket. 334-335 (FK) contributes to the substrate binding site. Arginine 342 lines the NAD(+) pocket. Arginine 447 contributes to the substrate binding site.

This sequence belongs to the UDP-glucose/GDP-mannose dehydrogenase family. In terms of tissue distribution, preferentially expressed in roots.

The catalysed reaction is UDP-alpha-D-glucose + 2 NAD(+) + H2O = UDP-alpha-D-glucuronate + 2 NADH + 3 H(+). It functions in the pathway nucleotide-sugar biosynthesis; UDP-alpha-D-glucuronate biosynthesis; UDP-alpha-D-glucuronate from UDP-alpha-D-glucose: step 1/1. Its activity is regulated as follows. Inhibited by UDP-xylose. Functionally, involved in the biosynthesis of UDP-glucuronic acid (UDP-GlcA), providing nucleotide sugars for cell-wall polymers. Required for the formation of cell wall ingrowths on the outer cell walls of nematode-induced syncytia. The protein is UDP-glucose 6-dehydrogenase 2 (UGD2) of Arabidopsis thaliana (Mouse-ear cress).